A 93-amino-acid chain; its full sequence is Small ribosomal subunit protein uS19 (93 aa).

Belongs to the universal ribosomal protein uS19 family.

In terms of biological role, protein S19 forms a complex with S13 that binds strongly to the 16S ribosomal RNA. The protein is Small ribosomal subunit protein uS19 of Acidothermus cellulolyticus (strain ATCC 43068 / DSM 8971 / 11B).